A 423-amino-acid chain; its full sequence is Gamma-glutamyl phosphate reductase (423 aa).

It belongs to the gamma-glutamyl phosphate reductase family.

It is found in the cytoplasm. The enzyme catalyses L-glutamate 5-semialdehyde + phosphate + NADP(+) = L-glutamyl 5-phosphate + NADPH + H(+). Its pathway is amino-acid biosynthesis; L-proline biosynthesis; L-glutamate 5-semialdehyde from L-glutamate: step 2/2. Catalyzes the NADPH-dependent reduction of L-glutamate 5-phosphate into L-glutamate 5-semialdehyde and phosphate. The product spontaneously undergoes cyclization to form 1-pyrroline-5-carboxylate. The chain is Gamma-glutamyl phosphate reductase from Burkholderia ambifaria (strain ATCC BAA-244 / DSM 16087 / CCUG 44356 / LMG 19182 / AMMD) (Burkholderia cepacia (strain AMMD)).